The sequence spans 542 residues: uncharacterized protein (542 aa).

A run of 5 helical transmembrane segments spans residues 4-23, 28-47, 57-79, 86-108, and 151-173; these read ILRD…GYPL, IGGI…AFGA, IVYQ…HGFL, GVIY…LIPH, and PVVG…IYLA. 2 RCK C-terminal domains span residues 186–270 and 273–356; these read RTLK…VIGC and EVQA…LGDS. Helical transmembrane passes span 365–384, 389–408, 415–437, 457–479, 484–506, and 519–541; these read IAVL…VPIP, ITVR…FLGA, LVWV…IFLA, WAIL…YVGY, IPMG…LGFA, and YAMV…IAVL.

This sequence belongs to the AAE transporter (TC 2.A.81) family.

It is found in the cell membrane. This is an uncharacterized protein from Symbiobacterium thermophilum (strain DSM 24528 / JCM 14929 / IAM 14863 / T).